The primary structure comprises 116 residues: Large ribosomal subunit protein bL19 (116 aa).

Belongs to the bacterial ribosomal protein bL19 family.

Its function is as follows. This protein is located at the 30S-50S ribosomal subunit interface and may play a role in the structure and function of the aminoacyl-tRNA binding site. The polypeptide is Large ribosomal subunit protein bL19 (Geobacillus sp. (strain WCH70)).